The sequence spans 358 residues: 4-hydroxy-3-methylbut-2-en-1-yl diphosphate synthase (flavodoxin) (358 aa).

Positions 264, 267, 299, and 306 each coordinate [4Fe-4S] cluster.

This sequence belongs to the IspG family. The cofactor is [4Fe-4S] cluster.

The catalysed reaction is (2E)-4-hydroxy-3-methylbut-2-enyl diphosphate + oxidized [flavodoxin] + H2O + 2 H(+) = 2-C-methyl-D-erythritol 2,4-cyclic diphosphate + reduced [flavodoxin]. It participates in isoprenoid biosynthesis; isopentenyl diphosphate biosynthesis via DXP pathway; isopentenyl diphosphate from 1-deoxy-D-xylulose 5-phosphate: step 5/6. Its function is as follows. Converts 2C-methyl-D-erythritol 2,4-cyclodiphosphate (ME-2,4cPP) into 1-hydroxy-2-methyl-2-(E)-butenyl 4-diphosphate. The protein is 4-hydroxy-3-methylbut-2-en-1-yl diphosphate synthase (flavodoxin) of Helicobacter acinonychis (strain Sheeba).